The chain runs to 160 residues: Baculoviral IAP repeat-containing protein 5.1-B (160 aa).

Residues 13-83 (QRLQDFRNMY…EGWEPDDDPW (71 aa)) form a BIR repeat. Thr43 is subject to Phosphothreonine; by CDK1. Cys66, Cys69, His86, and Cys93 together coordinate Zn(2+).

Belongs to the IAP family. Component of the CPC at least composed of survivin/birc5, incenp, cdca8/borealin and/or cdca9/dasra-A, and aurkb/aurora-B. Interacts directly with incenp (via N-terminus), and may weakly interact with aurkb (via N-terminus) to stabilize the complex. Interacts with GTP-bound ran in both the S and M phases of the cell cycle. Also found in a complex with ubiquitin-mediated signaling proteins including at least usp9x/xFAM, nploc4/npl4 and ufd1. Ubiquitination is required for centrosome-targeting.

The protein localises to the cytoplasm. Its subcellular location is the nucleus. The protein resides in the chromosome. It is found in the centromere. It localises to the cytoskeleton. The protein localises to the spindle. Component of the chromosomal passenger complex (CPC), a complex that acts as a key regulator of mitosis. The CPC complex has essential functions at the centromere in ensuring correct chromosome alignment and segregation and is required for chromatin-induced microtubule stabilization and spindle assembly. Stimulates the mitotic kinase activity of aurkb/aurora-B in the CPC. Does not appear to exhibit anti-apoptotic activity. CPC. Does not appear to exhibit anti-apoptotic activity. In Xenopus laevis (African clawed frog), this protein is Baculoviral IAP repeat-containing protein 5.1-B (birc5.1-b).